A 509-amino-acid chain; its full sequence is Maturase K (509 aa).

Belongs to the intron maturase 2 family. MatK subfamily.

It localises to the plastid. It is found in the chloroplast. Functionally, usually encoded in the trnK tRNA gene intron. Probably assists in splicing its own and other chloroplast group II introns. In Jacaranda mimosifolia (Jacaranda), this protein is Maturase K.